We begin with the raw amino-acid sequence, 343 residues long: Dihydroorotase (343 aa).

Zn(2+)-binding residues include histidine 14 and histidine 16. Substrate contacts are provided by residues 16–18 (HLR) and asparagine 42. 3 residues coordinate Zn(2+): lysine 100, histidine 137, and histidine 175. Lysine 100 bears the N6-carboxylysine mark. A substrate-binding site is contributed by histidine 137. A substrate-binding site is contributed by leucine 220. Aspartate 248 is a binding site for Zn(2+). Aspartate 248 is an active-site residue. 2 residues coordinate substrate: histidine 252 and alanine 264.

The protein belongs to the metallo-dependent hydrolases superfamily. DHOase family. Class II DHOase subfamily. As to quaternary structure, homodimer. It depends on Zn(2+) as a cofactor.

It catalyses the reaction (S)-dihydroorotate + H2O = N-carbamoyl-L-aspartate + H(+). Its pathway is pyrimidine metabolism; UMP biosynthesis via de novo pathway; (S)-dihydroorotate from bicarbonate: step 3/3. Catalyzes the reversible cyclization of carbamoyl aspartate to dihydroorotate. In Synechococcus sp. (strain CC9902), this protein is Dihydroorotase.